A 337-amino-acid chain; its full sequence is Ribosomal RNA small subunit methyltransferase C (337 aa).

It belongs to the methyltransferase superfamily. RsmC family. As to quaternary structure, monomer.

The protein resides in the cytoplasm. It carries out the reaction guanosine(1207) in 16S rRNA + S-adenosyl-L-methionine = N(2)-methylguanosine(1207) in 16S rRNA + S-adenosyl-L-homocysteine + H(+). Specifically methylates the guanine in position 1207 of 16S rRNA in the 30S particle. The polypeptide is Ribosomal RNA small subunit methyltransferase C (Acinetobacter baumannii (strain AB307-0294)).